We begin with the raw amino-acid sequence, 220 residues long: MDWIISDGLVPYEDALATMEARVAAISEGRAPEMIWLLEHPPLYTAGTSADPADLTDPDRFPVHTARRGGQYTYHGPGQRVVYVMLDLGKRGRDVRQFVCRMEAWVIATLAEFNVTGERREGRVGVWVQRQDKPRTAAGQLQEDKIAAIGVRLRKWVSFHGLSINVEPDLDHFSGIVPCGITEHGVTSLVDLGLPVTMADVDVALRKCFEETFGPLPVEA.

One can recognise a BPL/LPL catalytic domain in the interval 29–217 (GRAPEMIWLL…CFEETFGPLP (189 aa)). Residues 68–75 (RGGQYTYH), 148–150 (AIG), and 161–163 (GLS) contribute to the substrate site. C179 (acyl-thioester intermediate) is an active-site residue.

This sequence belongs to the LipB family.

The protein resides in the cytoplasm. It carries out the reaction octanoyl-[ACP] + L-lysyl-[protein] = N(6)-octanoyl-L-lysyl-[protein] + holo-[ACP] + H(+). Its pathway is protein modification; protein lipoylation via endogenous pathway; protein N(6)-(lipoyl)lysine from octanoyl-[acyl-carrier-protein]: step 1/2. In terms of biological role, catalyzes the transfer of endogenously produced octanoic acid from octanoyl-acyl-carrier-protein onto the lipoyl domains of lipoate-dependent enzymes. Lipoyl-ACP can also act as a substrate although octanoyl-ACP is likely to be the physiological substrate. The polypeptide is Octanoyltransferase (Dinoroseobacter shibae (strain DSM 16493 / NCIMB 14021 / DFL 12)).